A 324-amino-acid chain; its full sequence is dITP/XTP pyrophosphatase (324 aa).

The segment at 1-127 is unknown; sequence MTKTIFESKT…KNDNNFGDTI (127 aa). The NTP pyrophosphatase stretch occupies residues 128 to 324; it reads LIATHNEGKT…EVFPKWQLEN (197 aa). 131–136 contributes to the substrate binding site; it reads THNEGK. Residues E164 and D193 each coordinate Mg(2+). Catalysis depends on D193, which acts as the Proton acceptor. Residues S194, 277–280, K300, and 305–306 each bind substrate; these read FGYD and HR.

Belongs to the HAM1 NTPase family. As to quaternary structure, homodimer. Requires Mg(2+) as cofactor.

It carries out the reaction XTP + H2O = XMP + diphosphate + H(+). It catalyses the reaction dITP + H2O = dIMP + diphosphate + H(+). The catalysed reaction is ITP + H2O = IMP + diphosphate + H(+). Its function is as follows. Pyrophosphatase that catalyzes the hydrolysis of nucleoside triphosphates to their monophosphate derivatives, with a high preference for the non-canonical purine nucleotides XTP (xanthosine triphosphate), dITP (deoxyinosine triphosphate) and ITP. Seems to function as a house-cleaning enzyme that removes non-canonical purine nucleotides from the nucleotide pool, thus preventing their incorporation into DNA/RNA and avoiding chromosomal lesions. This Streptococcus agalactiae serotype III (strain NEM316) protein is dITP/XTP pyrophosphatase.